Here is a 957-residue protein sequence, read N- to C-terminus: ERC protein 2 (957 aa).

Polar residues predominate over residues 1 to 13; sequence MYGSARTISNLEG. The tract at residues 1–44 is disordered; it reads MYGSARTISNLEGSPSRSPRLPRSPRLGHRRTSSGGGGGTGKTL. Positions 14 to 25 are enriched in low complexity; the sequence is SPSRSPRLPRSP. Phosphoserine occurs at positions 65 and 666. Positions 140 to 917 form a coiled coil; it reads RQVRDSTMLD…RMKLMADNYD (778 aa). Basic residues predominate over residues 922–943; the sequence is HYHHHHHHHHHRSPGRSQHSNH. Residues 922–957 form a disordered region; sequence HYHHHHHHHHHRSPGRSQHSNHRPSPDQDDEEGIWA. The span at 948–957 shows a compositional bias: acidic residues; that stretch reads DQDDEEGIWA.

Interacts with BSN, ERC1, PPFIA1, PPFIA2, PPFIA3 and PPFIA4. Interacts through its C-terminus with the PDZ domain of RIMS1. Part of a complex consisting of ERC2, RIMS1 and UNC13A. In terms of tissue distribution, expressed throughout the central nervous system, including hippocampus, cortex, cerebellum and olfactory bulb.

It is found in the cytoplasm. Its subcellular location is the synapse. It localises to the presynaptic active zone. The protein localises to the cytoskeleton. Its function is as follows. Thought to be involved in the organization of the cytomatrix at the nerve terminals active zone (CAZ) which regulates neurotransmitter release. Seems to act together with BSN. May recruit liprin-alpha proteins to the CAZ. The polypeptide is ERC protein 2 (Erc2) (Mus musculus (Mouse)).